The following is a 418-amino-acid chain: Serine hydroxymethyltransferase (418 aa).

Residues Leu121 and Gly125–Leu127 each bind (6S)-5,6,7,8-tetrahydrofolate. Lys230 carries the N6-(pyridoxal phosphate)lysine modification. Residues Glu246 and Ser355–Phe357 contribute to the (6S)-5,6,7,8-tetrahydrofolate site.

It belongs to the SHMT family. Homodimer. Pyridoxal 5'-phosphate is required as a cofactor.

Its subcellular location is the cytoplasm. The catalysed reaction is (6R)-5,10-methylene-5,6,7,8-tetrahydrofolate + glycine + H2O = (6S)-5,6,7,8-tetrahydrofolate + L-serine. The protein operates within one-carbon metabolism; tetrahydrofolate interconversion. It participates in amino-acid biosynthesis; glycine biosynthesis; glycine from L-serine: step 1/1. Functionally, catalyzes the reversible interconversion of serine and glycine with tetrahydrofolate (THF) serving as the one-carbon carrier. This reaction serves as the major source of one-carbon groups required for the biosynthesis of purines, thymidylate, methionine, and other important biomolecules. Also exhibits THF-independent aldolase activity toward beta-hydroxyamino acids, producing glycine and aldehydes, via a retro-aldol mechanism. In Streptococcus pneumoniae serotype 2 (strain D39 / NCTC 7466), this protein is Serine hydroxymethyltransferase.